Reading from the N-terminus, the 199-residue chain is Nicotinamide riboside kinase 1 (199 aa).

ATP is bound at residue 10–18; the sequence is GVTNSGKTT. 2 residues coordinate Mg(2+): Thr17 and Asp36. Asp36 functions as the Proton acceptor in the catalytic mechanism. Substrate-binding positions include 36–39 and 55–56; these read DDFF and YD. Position 128 (Arg128) interacts with ATP. Residues Arg129 and 134–135 contribute to the substrate site; that span reads YQ. Residues 132–134 and 172–174 contribute to the ATP site; these read RVY and KSE.

The protein belongs to the uridine kinase family. NRK subfamily. In terms of assembly, monomer.

It carries out the reaction beta-nicotinamide D-riboside + ATP = beta-nicotinamide D-ribonucleotide + ADP + H(+). The enzyme catalyses beta-D-ribosylnicotinate + ATP = nicotinate beta-D-ribonucleotide + ADP + H(+). Its pathway is cofactor biosynthesis; NAD(+) biosynthesis. Its function is as follows. Catalyzes the phosphorylation of nicotinamide riboside (NR) and nicotinic acid riboside (NaR) to form nicotinamide mononucleotide (NMN) and nicotinic acid mononucleotide (NaMN). The enzyme also phosphorylates the antitumor drugs tiazofurin and 3-deazaguanosine. This Homo sapiens (Human) protein is Nicotinamide riboside kinase 1 (NMRK1).